The chain runs to 251 residues: 5'-nucleotidase SurE (251 aa).

Residues D8, D9, S40, and N95 each contribute to the a divalent metal cation site.

Belongs to the SurE nucleotidase family. Requires a divalent metal cation as cofactor.

The protein localises to the cytoplasm. It carries out the reaction a ribonucleoside 5'-phosphate + H2O = a ribonucleoside + phosphate. In terms of biological role, nucleotidase that shows phosphatase activity on nucleoside 5'-monophosphates. This chain is 5'-nucleotidase SurE, found in Maridesulfovibrio salexigens (strain ATCC 14822 / DSM 2638 / NCIMB 8403 / VKM B-1763) (Desulfovibrio salexigens).